Reading from the N-terminus, the 437-residue chain is Na(+)/H(+) antiporter NhaA (437 aa).

The next 11 membrane-spanning stretches (helical) occupy residues 12 to 32, 65 to 85, 103 to 123, 133 to 153, 162 to 182, 186 to 206, 214 to 234, 308 to 328, 333 to 353, 377 to 397, and 412 to 432; these read SMNITASILLFVTAIAAAVIA, LTMIEFINDGLMTIFFLMVGL, ALPFIAACGGMVVPVVIYSMV, GLAIPMATDIAFSLGVLSLLG, IFLTAFAVVDDIGGILVIAIF, HVAYEYLLWAALLYVLLYFIG, IFFLVVGVVIWYLFLQSGIHS, GAVNYLVLPLFAFVNAGVMFS, VIGGVTLAVALGLLAGKFLGI, ISGVALLGGIGFTVSLFIANL, and LGVLSGTVMAGILGYLVLHWV.

Belongs to the NhaA Na(+)/H(+) (TC 2.A.33) antiporter family.

The protein resides in the cell inner membrane. It carries out the reaction Na(+)(in) + 2 H(+)(out) = Na(+)(out) + 2 H(+)(in). Functionally, na(+)/H(+) antiporter that extrudes sodium in exchange for external protons. This is Na(+)/H(+) antiporter NhaA from Bacteroides fragilis (strain ATCC 25285 / DSM 2151 / CCUG 4856 / JCM 11019 / LMG 10263 / NCTC 9343 / Onslow / VPI 2553 / EN-2).